We begin with the raw amino-acid sequence, 637 residues long: Rab11 family-interacting protein 4 (637 aa).

One can recognise an EF-hand domain in the interval 49–84; that stretch reads GQGEEVEKLVKYLDPNDLGRINFKDFCRGVFAMKGC. The Ca(2+) site is built by Asp-62, Asn-64, Arg-68, and Asp-73. The segment at 82–637 is necessary for interaction with RAB11A, subcellular location, homo- or heterooligomerization; it reads KGCEELLKDV…HNPSILEIKH (556 aa). Disordered stretches follow at residues 138-175 and 219-256; these read EEEA…PAEK and YGEG…SAGQ. Residues 280 to 617 are a coiled coil; it reads KINLLNDLEA…EEINFRLRQY (338 aa). The FIP-RBD domain occupies 574-636; the sequence is EAKNLFAAQT…DHNPSILEIK (63 aa).

As to quaternary structure, homodimer. Forms a complex with Rab11 (RAB11A or RAB11B) and ARF6. Interacts with RAB11A; the interaction is direct. Forms a heterooligomeric complex with RAB11FIP2, RAB11FIP3 and RAB11FIP5. Interacts with ECPAS. In terms of assembly, (Microbial infection) Interacts with human cytomegalovirus/HHV-5 protein gM/UL100. Present at high level in testis (at protein level). Weakly expressed in other tissues.

The protein resides in the endosome. The protein localises to the cytoplasm. Its subcellular location is the cytoskeleton. It localises to the spindle. It is found in the microtubule organizing center. The protein resides in the centrosome. The protein localises to the recycling endosome membrane. Its subcellular location is the cleavage furrow. It localises to the midbody. It is found in the cytoplasmic vesicle. In terms of biological role, acts as a regulator of endocytic traffic by participating in membrane delivery. Required for the abscission step in cytokinesis, possibly by acting as an 'address tag' delivering recycling endosome membranes to the cleavage furrow during late cytokinesis. In case of infection by HCMV (human cytomegalovirus), may participate in egress of the virus out of nucleus; this function is independent of ARF6. In Homo sapiens (Human), this protein is Rab11 family-interacting protein 4 (RAB11FIP4).